The chain runs to 562 residues: MSNNKETPEHLQAQNIIVIHPGSLYLRMGRASDVNPCRLLHAIGRRRKPGGRAYRDRVLSVPIAKPKESLSEFEECRLQVSHTLQSCVQSDGRRRYATPPQQISAFNRRSGAETVQASRVDWKDDLPGDKVFGEEVLWLNPAGEFNVHYPIRRGELNLHKDVGGSMSGVMCDLQDIWEYVLRHRLRIDLKQLKQYKAVLVISDIYNRAHLKELTSLLLNKIGFGCCFLVQDHVSATFGAGLGYACVVDVGDQKTSISCVEDGISHPNTRVRLPYGGADITQTFHWMLQKCSFPYKECDQSRPQDAFLLKQLKEDICHVNLDVCGAQEKTFAVHQPQQEKRRFTLQIGDEAIVAPLGLFHTELLSVTGVNKSTPMTQKPSRAQPHPEDCFDAEYLRETGRRGKENLEQTANESGMANAENADEDMVVEGLEQDREGKVNEKDFILPGGQMIGIDQAVLQSIERCPNDELKRKMYGCILVVGGGMKFTGISNWLQNRVALKIPLMYRSEHNIVTSSKDIDAEITAWKGAAIMSCLESAAELWLTEAEWTRYGLRILREKAVFMW.

ATP is bound at residue D248–D251.

The protein belongs to the actin family. ARP8 subfamily. As to quaternary structure, component of the chromatin remodeling Ino80 complex. Exists as monomers and dimers, but the dimer is most probably the biologically relevant form required for stable interactions with histones that exploits the twofold symmetry of the nucleosome core.

It is found in the nucleus. Plays an important role in the functional organization of mitotic chromosomes. Exhibits low basal ATPase activity, and unable to polymerize. In terms of biological role, proposed core component of the chromatin remodeling INO80 complex which is involved in transcriptional regulation, DNA replication and probably DNA repair. Strongly prefer nucleosomes and H3-H4 tetramers over H2A-H2B dimers, suggesting it may act as a nucleosome recognition module within the complex. The polypeptide is Actin-related protein 8 (Aedes aegypti (Yellowfever mosquito)).